The sequence spans 315 residues: DDRGK domain-containing protein 1 (315 aa).

Residues 1–28 (MVGPWVYLVAAVLLIGLILFLTRSRGRA) traverse the membrane as a helical segment. The segment at 1 to 115 (MVGPWVYLVA…IEKPAEVHPT (115 aa)) is mediates interaction with CDK5RAP3. At 29 to 315 (AAADGEPLHN…GQDLPAQASA (287 aa)) the chain is on the cytoplasmic side. A disordered region spans residues 30-184 (AADGEPLHNE…ERKAQEEQAR (155 aa)). Residues 34–43 (EPLHNEEERA) show a composition bias toward basic and acidic residues. Phosphoserine is present on serine 73. The mediates interaction with TRIP4 stretch occupies residues 119 to 217 (GAKKLRKLEE…MTEEQSHSFL (99 aa)). Over residues 125–184 (KLEEKQARKAQREAEEAEREERKRLESQREAEWKKEEERLRLKEEQKEEEERKAQEEQAR) the composition is skewed to basic and acidic residues. Residues 196–210 (AFVVEEEGVSETMTE) carry the UFM1-interacting motif (UFIM) motif. The mediates interaction with UFL1 stretch occupies residues 217–315 (LTEFINYIKK…GQDLPAQASA (99 aa)). The region spanning 230-274 (VLLEDLAFQMGLRTQDAINRIQDLLTEGTLTGVIDDRGKFIYITP) is the PCI domain. Lysine 268 is covalently cross-linked (Glycyl lysine isopeptide (Lys-Gly) (interchain with G-Cter in UFM1)).

It belongs to the DDRGK1 family. In terms of assembly, component of the UFM1 ribosome E3 ligase (UREL) complex, composed of UFL1, DDRGK1 and CDK5RAP3. Interacts with (unphosphorylated) ERN1/IRE1-alpha; interaction is dependent on UFM1 and takes place in response to endoplasmic reticulum stress, regulating ERN1/IRE1-alpha stability. Interacts with NFKBIA. Interacts with SOX9. In terms of processing, ufmylated; conjugated to ubiquitin-like protein UFM1, probably at Lys-268 by UFL1. The relevance of ufmylation is however unclear: as DDRGK1 acts as a substrate adapter for ufmylation, it is uncertain whether ufmylation is a collateral effect of the ufmylation process or whether it is required to regulate its activity. Ubiquitinated. Ubiquitination probably triggers proteasomal degradation and is negatively regulated by UFL1, the enzyme involved in the ufmylation of DDRGK1. Ubiquitously expressed. Higher expression in pancreatic islets, pancreatic acini and testis (at protein level). Highly expressed in the intestinal exocrine cells.

The protein localises to the endoplasmic reticulum membrane. Component of the UFM1 ribosome E3 ligase (UREL) complex, a multiprotein complex that catalyzes ufmylation of endoplasmic reticulum-docked proteins. The UREL complex plays a key role in ribosome recycling by mediating mono-ufmylation of the RPL26/uL24 subunit of the 60S ribosome following ribosome dissociation: ufmylation weakens the junction between post-termination 60S subunits and SEC61 translocons, promoting release and recycling of the large ribosomal subunit from the endoplasmic reticulum membrane. Ufmylation of RPL26/uL24 and subsequent 60S ribosome recycling either take place after normal termination of translation or after ribosome stalling during cotranslational translocation at the endoplasmic reticulum. Within the UREL complex, DDRGK1 tethers the complex to the endoplasmic reticulum membrane to restrict its activity to endoplasmic reticulum-docked ribosomes and acts as an ufmylation 'reader': following RPL26/uL24 ufmylation, DDRGK1 specifically binds to ufmylated RPL26/uL24 via its UFIM motif, resulting in stable association between the 60S ribosome and the UREL complex, followed by dissociation of the 60S ribosome subunit from the endoplasmic reticulum membrane. The UREL complex is also involved in reticulophagy in response to endoplasmic reticulum stress by promoting ufmylation of proteins such as CYB5R3 and RPN1, thereby promoting lysosomal degradation of ufmylated proteins. Ufmylation-dependent reticulophagy inhibits the unfolded protein response (UPR) by regulating ERN1/IRE1-alpha stability. Acts as a regulator of immunity by promoting differentiation of B-cells into plasma cells: acts by promoting expansion of the endoplasmic reticulum and regulating the unfolded protein response (UPR). May also be required for TRIP4 ufmylation. May play a role in NF-kappa-B-mediated transcription through regulation of the phosphorylation and the degradation of NFKBIA, the inhibitor of NF-kappa-B. Plays a role in cartilage development through SOX9, inhibiting the ubiquitin-mediated proteasomal degradation of this transcriptional regulator. Required for stabilization and ufmylation of ATG9A. This is DDRGK domain-containing protein 1 from Mus musculus (Mouse).